Consider the following 303-residue polypeptide: 2-dehydropantoate 2-reductase (303 aa).

Residues 7-12 (GCGALG), Asn-98, and Ala-122 contribute to the NADP(+) site. Asn-98 is a substrate binding site. The active-site Proton donor is the Lys-176. Residues Asn-180, Asn-184, Asn-194, and Ser-244 each contribute to the substrate site. Position 256 (Glu-256) interacts with NADP(+).

It belongs to the ketopantoate reductase family. Monomer.

It is found in the cytoplasm. The enzyme catalyses (R)-pantoate + NADP(+) = 2-dehydropantoate + NADPH + H(+). Its pathway is cofactor biosynthesis; (R)-pantothenate biosynthesis; (R)-pantoate from 3-methyl-2-oxobutanoate: step 2/2. Catalyzes the NADPH-dependent reduction of ketopantoate into pantoic acid. The protein is 2-dehydropantoate 2-reductase (panE) of Salmonella typhi.